The sequence spans 152 residues: Large ribosomal subunit protein bL9 (152 aa).

The protein belongs to the bacterial ribosomal protein bL9 family.

Its function is as follows. Binds to the 23S rRNA. In Synechococcus sp. (strain CC9311), this protein is Large ribosomal subunit protein bL9.